A 491-amino-acid polypeptide reads, in one-letter code: NADH-quinone oxidoreductase subunit N 1 (491 aa).

The next 14 membrane-spanning stretches (helical) occupy residues 15–35 (VLGM…VDMF), 41–61 (VLLT…ALDY), 77–97 (FGVL…LIAF), 105–125 (LSQG…LFLV), 130–150 (LVTI…LTGF), 165–185 (LLLG…IYGM), 211–231 (PILL…VSMF), 247–269 (PVTA…RFLN), 279–299 (WQLL…IVAV), 307–327 (MLAY…LAAS), 333–353 (AFTV…AVLI), 378–398 (LALA…TAGF), 416–436 (LAII…RVIV), and 459–479 (LGVI…NIFT).

It belongs to the complex I subunit 2 family. As to quaternary structure, NDH-1 is composed of 14 different subunits. Subunits NuoA, H, J, K, L, M, N constitute the membrane sector of the complex.

The protein localises to the cell membrane. It catalyses the reaction a quinone + NADH + 5 H(+)(in) = a quinol + NAD(+) + 4 H(+)(out). Functionally, NDH-1 shuttles electrons from NADH, via FMN and iron-sulfur (Fe-S) centers, to quinones in the respiratory chain. The immediate electron acceptor for the enzyme in this species is believed to be ubiquinone. Couples the redox reaction to proton translocation (for every two electrons transferred, four hydrogen ions are translocated across the cytoplasmic membrane), and thus conserves the redox energy in a proton gradient. The sequence is that of NADH-quinone oxidoreductase subunit N 1 from Herpetosiphon aurantiacus (strain ATCC 23779 / DSM 785 / 114-95).